A 44-amino-acid polypeptide reads, in one-letter code: Photosystem I reaction center subunit IX (44 aa).

The helical transmembrane segment at 7-27 (YLSTAPVLAISWLIFVAGLLI) threads the bilayer.

This sequence belongs to the PsaJ family.

The protein resides in the plastid. Its subcellular location is the chloroplast thylakoid membrane. Its function is as follows. May help in the organization of the PsaE and PsaF subunits. This Larix decidua (European larch) protein is Photosystem I reaction center subunit IX.